The primary structure comprises 505 residues: ATP synthase subunit alpha, chloroplastic (505 aa).

Position 170–177 (170–177) interacts with ATP; the sequence is GDRQTGKT.

It belongs to the ATPase alpha/beta chains family. F-type ATPases have 2 components, CF(1) - the catalytic core - and CF(0) - the membrane proton channel. CF(1) has five subunits: alpha(3), beta(3), gamma(1), delta(1), epsilon(1). CF(0) has four main subunits: a, b, b' and c.

It localises to the plastid. The protein localises to the chloroplast thylakoid membrane. The catalysed reaction is ATP + H2O + 4 H(+)(in) = ADP + phosphate + 5 H(+)(out). In terms of biological role, produces ATP from ADP in the presence of a proton gradient across the membrane. The alpha chain is a regulatory subunit. The sequence is that of ATP synthase subunit alpha, chloroplastic from Mesostigma viride (Green alga).